The chain runs to 341 residues: NADH-quinone oxidoreductase subunit H (341 aa).

8 helical membrane-spanning segments follow: residues 38–58 (PSVV…KLLV), 70–90 (ILFI…WAVI), 115–135 (IGVL…IVAG), 161–181 (MGLI…GEMV), 187–207 (MPFW…ISLL), 239–259 (LFFL…TIFF), 275–295 (IPGL…FVWT), and 314–334 (VFLP…LFTG).

The protein belongs to the complex I subunit 1 family. In terms of assembly, NDH-1 is composed of 14 different subunits. Subunits NuoA, H, J, K, L, M, N constitute the membrane sector of the complex.

Its subcellular location is the cell membrane. It catalyses the reaction a quinone + NADH + 5 H(+)(in) = a quinol + NAD(+) + 4 H(+)(out). Its function is as follows. NDH-1 shuttles electrons from NADH, via FMN and iron-sulfur (Fe-S) centers, to quinones in the respiratory chain. The immediate electron acceptor for the enzyme in this species is believed to be ubiquinone. Couples the redox reaction to proton translocation (for every two electrons transferred, four hydrogen ions are translocated across the cytoplasmic membrane), and thus conserves the redox energy in a proton gradient. This subunit may bind ubiquinone. This is NADH-quinone oxidoreductase subunit H from Wolbachia sp. subsp. Brugia malayi (strain TRS).